The primary structure comprises 341 residues: L-threonine 3-dehydrogenase (341 aa).

C38 lines the Zn(2+) pocket. Catalysis depends on charge relay system residues T40 and H43. Zn(2+) contacts are provided by H63, E64, C93, C96, C99, and C107. Residues I175, D195, R200, 262-264 (LGI), and 286-287 (IY) contribute to the NAD(+) site.

Belongs to the zinc-containing alcohol dehydrogenase family. Homotetramer. The cofactor is Zn(2+).

The protein resides in the cytoplasm. It carries out the reaction L-threonine + NAD(+) = (2S)-2-amino-3-oxobutanoate + NADH + H(+). Its pathway is amino-acid degradation; L-threonine degradation via oxydo-reductase pathway; glycine from L-threonine: step 1/2. Its function is as follows. Catalyzes the NAD(+)-dependent oxidation of L-threonine to 2-amino-3-ketobutyrate. The polypeptide is L-threonine 3-dehydrogenase (Photorhabdus laumondii subsp. laumondii (strain DSM 15139 / CIP 105565 / TT01) (Photorhabdus luminescens subsp. laumondii)).